The sequence spans 140 residues: Nucleoside diphosphate kinase (140 aa).

ATP-binding residues include K11, F59, R87, T93, R104, and N114. The active-site Pros-phosphohistidine intermediate is the H117.

This sequence belongs to the NDK family. Homotetramer. Requires Mg(2+) as cofactor.

It localises to the cytoplasm. The enzyme catalyses a 2'-deoxyribonucleoside 5'-diphosphate + ATP = a 2'-deoxyribonucleoside 5'-triphosphate + ADP. The catalysed reaction is a ribonucleoside 5'-diphosphate + ATP = a ribonucleoside 5'-triphosphate + ADP. Major role in the synthesis of nucleoside triphosphates other than ATP. The ATP gamma phosphate is transferred to the NDP beta phosphate via a ping-pong mechanism, using a phosphorylated active-site intermediate. This Brucella anthropi (strain ATCC 49188 / DSM 6882 / CCUG 24695 / JCM 21032 / LMG 3331 / NBRC 15819 / NCTC 12168 / Alc 37) (Ochrobactrum anthropi) protein is Nucleoside diphosphate kinase.